A 227-amino-acid chain; its full sequence is Ras-related protein Rab-3C (227 aa).

The GTP site is built by Ser39, Gly42, Lys43, Thr44, Ser45, Thr56, Ser57, Ser61, and Thr62. Thr44 is a binding site for Mg(2+). The Switch 1 motif lies at 53-66 (DSFTSAFVSTVGID). Mg(2+)-binding residues include Thr62 and Asp85. Thr86 is modified (phosphothreonine; by LRRK2). The Switch 2 motif lies at 86–104 (TAGQERYRTITTAYYRGAM). Residues Gly88, Asn143, Lys144, Asp146, Ala174, and Lys175 each coordinate GTP. Phosphoserine is present on residues Ser196 and Ser198. A disordered region spans residues 202-227 (DPAITAAKQSTRLKETPPPPQPNCGC). A Phosphothreonine modification is found at Thr206. Pro residues predominate over residues 217–227 (TPPPPQPNCGC). Residues Cys225 and Cys227 are each lipidated (S-geranylgeranyl cysteine). Cys227 is subject to Cysteine methyl ester.

This sequence belongs to the small GTPase superfamily. Rab family. In terms of assembly, interacts with RIMS1, RIMS2, RPH3A and RPH3AL. Interacts with GDI2, CHM and CHML; phosphorylation at Thr-86 disrupts these interactions. Interacts with MADD (via uDENN domain); the GTP-bound form is preferred for interaction. Mg(2+) serves as cofactor. Post-translationally, phosphorylation of Thr-86 in the switch II region by LRRK2 prevents the association of RAB regulatory proteins, including CHM, CHML and RAB GDP dissociation inhibitor GDI2.

Its subcellular location is the cell membrane. It carries out the reaction GTP + H2O = GDP + phosphate + H(+). With respect to regulation, regulated by guanine nucleotide exchange factors (GEFs) which promote the exchange of bound GDP for free GTP. Regulated by GTPase activating proteins (GAPs) which increase the GTP hydrolysis activity. Inhibited by GDP dissociation inhibitors (GDIs) which prevent Rab-GDP dissociation. In terms of biological role, the small GTPases Rab are key regulators of intracellular membrane trafficking, from the formation of transport vesicles to their fusion with membranes. Rabs cycle between an inactive GDP-bound form and an active GTP-bound form that is able to recruit to membranes different sets of downstream effectors directly responsible for vesicle formation, movement, tethering and fusion. This chain is Ras-related protein Rab-3C, found in Mus musculus (Mouse).